Consider the following 146-residue polypeptide: Ribosomal RNA large subunit methyltransferase H (146 aa).

S-adenosyl-L-methionine contacts are provided by residues L62, G94, and 113-118; that span reads LGELTL.

Belongs to the RNA methyltransferase RlmH family. In terms of assembly, homodimer.

Its subcellular location is the cytoplasm. It catalyses the reaction pseudouridine(1915) in 23S rRNA + S-adenosyl-L-methionine = N(3)-methylpseudouridine(1915) in 23S rRNA + S-adenosyl-L-homocysteine + H(+). In terms of biological role, specifically methylates the pseudouridine at position 1915 (m3Psi1915) in 23S rRNA. The sequence is that of Ribosomal RNA large subunit methyltransferase H from Deinococcus radiodurans (strain ATCC 13939 / DSM 20539 / JCM 16871 / CCUG 27074 / LMG 4051 / NBRC 15346 / NCIMB 9279 / VKM B-1422 / R1).